The chain runs to 476 residues: Aspartyl/glutamyl-tRNA(Asn/Gln) amidotransferase subunit B (476 aa).

This sequence belongs to the GatB/GatE family. GatB subfamily. As to quaternary structure, heterotrimer of A, B and C subunits.

The enzyme catalyses L-glutamyl-tRNA(Gln) + L-glutamine + ATP + H2O = L-glutaminyl-tRNA(Gln) + L-glutamate + ADP + phosphate + H(+). It catalyses the reaction L-aspartyl-tRNA(Asn) + L-glutamine + ATP + H2O = L-asparaginyl-tRNA(Asn) + L-glutamate + ADP + phosphate + 2 H(+). Its function is as follows. Allows the formation of correctly charged Asn-tRNA(Asn) or Gln-tRNA(Gln) through the transamidation of misacylated Asp-tRNA(Asn) or Glu-tRNA(Gln) in organisms which lack either or both of asparaginyl-tRNA or glutaminyl-tRNA synthetases. The reaction takes place in the presence of glutamine and ATP through an activated phospho-Asp-tRNA(Asn) or phospho-Glu-tRNA(Gln). This Laribacter hongkongensis (strain HLHK9) protein is Aspartyl/glutamyl-tRNA(Asn/Gln) amidotransferase subunit B.